A 197-amino-acid chain; its full sequence is Glycerol-3-phosphate acyltransferase (197 aa).

The next 5 helical transmembrane spans lie at 1–21, 78–98, 111–131, 136–155, and 159–176; these read MNIL…GFLI, LIEV…IWLG, MFLA…LIVL, FVSL…MFFY, and FIHT…LVIW.

This sequence belongs to the PlsY family. As to quaternary structure, probably interacts with PlsX.

It is found in the cell inner membrane. It carries out the reaction an acyl phosphate + sn-glycerol 3-phosphate = a 1-acyl-sn-glycero-3-phosphate + phosphate. It functions in the pathway lipid metabolism; phospholipid metabolism. Its function is as follows. Catalyzes the transfer of an acyl group from acyl-phosphate (acyl-PO(4)) to glycerol-3-phosphate (G3P) to form lysophosphatidic acid (LPA). This enzyme utilizes acyl-phosphate as fatty acyl donor, but not acyl-CoA or acyl-ACP. This chain is Glycerol-3-phosphate acyltransferase, found in Prochlorococcus marinus (strain MIT 9215).